The chain runs to 453 residues: Pre-mRNA-splicing factor prp46 (453 aa).

The span at 62–71 (EKQAKAAAAG) shows a compositional bias: low complexity. The disordered stretch occupies residues 62–129 (EKQAKAAAAG…PSATRQQRPD (68 aa)). 7 WD repeats span residues 142–181 (GHLG…LRLT), 184–223 (GHIS…VIRH), 226–265 (GHLS…NIHV), 268–309 (GHKG…GVLT), 311–350 (HKKG…QNFE), 351–389 (GHNA…KFQS), and 400–439 (DAEA…TPES). The segment at 432 to 453 (DDEATPESHPVTWAPTLGRQRY) is disordered.

Belongs to the WD repeat PRL1/PRL2 family. Associated with the spliceosome.

Its subcellular location is the cytoplasm. The protein resides in the nucleus. Its function is as follows. Involved in pre-mRNA splicing and required for cell cycle progression at G2/M. This Aspergillus fumigatus (strain ATCC MYA-4609 / CBS 101355 / FGSC A1100 / Af293) (Neosartorya fumigata) protein is Pre-mRNA-splicing factor prp46 (prp46).